Consider the following 166-residue polypeptide: NAD(P)H-quinone oxidoreductase subunit I, chloroplastic (166 aa).

4Fe-4S ferredoxin-type domains are found at residues 55–84 (GRIHFEFDKCIACEVCVRVCPIDLPVVDWK) and 95–124 (LNYSIDFGICIFCGNCVEYCPTNCLSMTEE). The [4Fe-4S] cluster site is built by Cys64, Cys67, Cys70, Cys74, Cys104, Cys107, Cys110, and Cys114.

This sequence belongs to the complex I 23 kDa subunit family. NDH is composed of at least 16 different subunits, 5 of which are encoded in the nucleus. Requires [4Fe-4S] cluster as cofactor.

The protein resides in the plastid. Its subcellular location is the chloroplast thylakoid membrane. The catalysed reaction is a plastoquinone + NADH + (n+1) H(+)(in) = a plastoquinol + NAD(+) + n H(+)(out). The enzyme catalyses a plastoquinone + NADPH + (n+1) H(+)(in) = a plastoquinol + NADP(+) + n H(+)(out). NDH shuttles electrons from NAD(P)H:plastoquinone, via FMN and iron-sulfur (Fe-S) centers, to quinones in the photosynthetic chain and possibly in a chloroplast respiratory chain. The immediate electron acceptor for the enzyme in this species is believed to be plastoquinone. Couples the redox reaction to proton translocation, and thus conserves the redox energy in a proton gradient. This Chaetymenia peduncularis (Daisy) protein is NAD(P)H-quinone oxidoreductase subunit I, chloroplastic.